The chain runs to 432 residues: Trigger factor (432 aa).

One can recognise a PPIase FKBP-type domain in the interval 161 to 246 (EDRVTIDFTG…LKKVEERELP (86 aa)).

It belongs to the FKBP-type PPIase family. Tig subfamily. As to quaternary structure, homodimer and monomer. In vivo most of the ribosomes are in complex with monomeric TF. Uncomplexed TF, however, is in a monomer-dimer equilibrium with approximately two thirds of TF existing in a dimeric state.

It is found in the cytoplasm. It carries out the reaction [protein]-peptidylproline (omega=180) = [protein]-peptidylproline (omega=0). Its function is as follows. Involved in protein export. Acts as a chaperone by maintaining the newly synthesized protein in an open conformation. Functions as a peptidyl-prolyl cis-trans isomerase. The polypeptide is Trigger factor (Shigella boydii serotype 18 (strain CDC 3083-94 / BS512)).